The primary structure comprises 100 residues: Urease subunit gamma (100 aa).

Belongs to the urease gamma subunit family. In terms of assembly, heterotrimer of UreA (gamma), UreB (beta) and UreC (alpha) subunits. Three heterotrimers associate to form the active enzyme.

The protein resides in the cytoplasm. It catalyses the reaction urea + 2 H2O + H(+) = hydrogencarbonate + 2 NH4(+). It participates in nitrogen metabolism; urea degradation; CO(2) and NH(3) from urea (urease route): step 1/1. The protein is Urease subunit gamma of Micrococcus luteus (strain ATCC 4698 / DSM 20030 / JCM 1464 / CCM 169 / CCUG 5858 / IAM 1056 / NBRC 3333 / NCIMB 9278 / NCTC 2665 / VKM Ac-2230) (Micrococcus lysodeikticus).